We begin with the raw amino-acid sequence, 263 residues long: Triosephosphate isomerase (263 aa).

Residue 10–12 participates in substrate binding; sequence NWK. Catalysis depends on His-104, which acts as the Electrophile. The Proton acceptor role is filled by Glu-176. Substrate-binding positions include Gly-182, Ser-221, and 242 to 243; that span reads GG.

It belongs to the triosephosphate isomerase family. In terms of assembly, homodimer.

Its subcellular location is the cytoplasm. It catalyses the reaction D-glyceraldehyde 3-phosphate = dihydroxyacetone phosphate. The protein operates within carbohydrate biosynthesis; gluconeogenesis. Its pathway is carbohydrate degradation; glycolysis; D-glyceraldehyde 3-phosphate from glycerone phosphate: step 1/1. Functionally, involved in the gluconeogenesis. Catalyzes stereospecifically the conversion of dihydroxyacetone phosphate (DHAP) to D-glyceraldehyde-3-phosphate (G3P). The polypeptide is Triosephosphate isomerase (Haemophilus influenzae (strain ATCC 51907 / DSM 11121 / KW20 / Rd)).